We begin with the raw amino-acid sequence, 474 residues long: Myocyte-specific enhancer factor 2C (474 aa).

Residues 3–57 form the MADS-box domain; sequence RKKIQITRIMDERNRQVTFTKRKFGLMKKAYELSVLCDCEIALIIFNSTNKLFQY. N6-acetyllysine is present on lysine 4. A DNA-binding region (mef2-type) is located at residues 58 to 86; the sequence is ASTDMDKVLLKYTEYNEPHESRTNSDIVE. The residue at position 59 (serine 59) is a Phosphoserine; by CK2. Residues 91-118 are disordered; it reads KGLNGCDSPDPDADDSVGHSPESEDKYR. Residues serine 98 and serine 106 each carry the phosphoserine modification. The residue at position 108 (glycine 108) is a Phosphothreonine. Position 110 is a phosphoserine (serine 110). N6-acetyllysine occurs at positions 116 and 119. A phosphoserine mark is found at serine 222 and serine 228. N6-acetyllysine occurs at positions 234 and 239. At serine 240 the chain carries Phosphoserine. Residues lysine 252 and lysine 264 each carry the N6-acetyllysine modification. Positions 271 to 278 are beta domain; it reads SEDVDLLL. A phosphothreonine; by MAPK14 mark is found at threonine 293 and threonine 300. The transcription repressor stretch occupies residues 368 to 399; the sequence is ACTSTHLSQSSNLSLPSTQSLSIKSEPVSPPR. Residues 375–390 show a composition bias toward polar residues; that stretch reads SQSSNLSLPSTQSLSI. A disordered region spans residues 375 to 474; it reads SQSSNLSLPS…RMRLSEGWAT (100 aa). Residue lysine 391 forms a Glycyl lysine isopeptide (Lys-Gly) (interchain with G-Cter in SUMO) linkage. Serine 396 carries the phosphoserine; by CDK5 modification. Residue serine 420 is modified to Phosphoserine; by MAPK7. Residues 420-433 are compositionally biased toward low complexity; that stretch reads SPVDSLSSCSSSYD. Basic and acidic residues predominate over residues 434–444; sequence GSDREDHRNEF. Residue serine 446 is modified to Phosphoserine.

It belongs to the MEF2 family. Forms a complex with class II HDACs in undifferentiating cells. On myogenic differentiation, HDACs are released into the cytoplasm allowing MEF2s to interact with other proteins for activation. Interacts with EP300 in differentiating cells; the interaction acetylates MEF2C leading to increased DNA binding and activation. Interacts with HDAC7 and CARM1. Interacts with HDAC4, HDAC7 AND HDAC9; the interaction with HDACs represses transcriptional activity. Interacts with LPIN1. Interacts with MYOCD. Interacts with AKAP13. Interacts with FOXK1; the interaction inhibits MEF2C transactivation activity. Interacts (via N-terminus) with HABP4; this interaction decreases DNA-binding activity of MEF2C in myocardial cells in response to mechanical stress. Interacts with JPH2; interaction specifically takes place with the Junctophilin-2 N-terminal fragment cleavage product of JPH2. Interacts (via MADS box) with SOX18. Interacts with PHF7; the interaction promotes MEF2C binding to its transcription targets. In terms of processing, phosphorylation on Ser-59 enhances DNA binding activity. Phosphorylation on Ser-396 is required for Lys-391 sumoylation and inhibits transcriptional activity. Post-translationally, acetylated by p300 on several sites in diffentiating myocytes. Acetylation on Lys-4 increases DNA binding and transactivation. Sumoylated on Lys-391 with SUMO2 but not by SUMO1 represses transcriptional activity. In terms of processing, proteolytically cleaved in cerebellar granule neurons, probably by caspase 7, following neurotoxicity. Preferentially cleaves the CDK5-mediated hyperphosphorylated form which leads to neuron apoptosis and transcriptional inactivation. As to expression, widely expressed though mainly restricted to skeletal and cardiac muscle, brain, neurons and lymphocytes. Beta domain-lacking isoforms are the most predominantly expressed in all tissues including skeletal and cardiac muscle and brain. Only brain expresses all isoforms. Expression occurs primarily in the internal granule cell layer of the olfactory bulb, cortex, thalamus, hippocampus and cerebellum. Low levels in the cerebellum and hindbrain. Expressed throughout the cortex, including the frontal and entorhinal cortex, dentate gyrus, and basolateral amygdala. Selectively expressed in B-cells but not in T-cells, and its expression increases as B-cells mature.

It localises to the nucleus. It is found in the cytoplasm. The protein localises to the sarcoplasm. In terms of biological role, transcription activator which binds specifically to the MEF2 element present in the regulatory regions of many muscle-specific genes. Controls cardiac morphogenesis and myogenesis, and is also involved in vascular development. Enhances transcriptional activation mediated by SOX18. May also be involved in neurogenesis and in the development of cortical architecture. Isoforms that lack the repressor domain are more active than isoform 1. Plays an essential role in hippocampal-dependent learning and memory by suppressing the number of excitatory synapses and thus regulating basal and evoked synaptic transmission. Crucial for normal neuronal development, distribution, and electrical activity in the neocortex. Necessary for proper development of megakaryocytes and platelets and for bone marrow B-lymphopoiesis. Required for B-cell survival and proliferation in response to BCR stimulation, efficient IgG1 antibody responses to T-cell-dependent antigens and for normal induction of germinal center B-cells. The polypeptide is Myocyte-specific enhancer factor 2C (Mus musculus (Mouse)).